Consider the following 85-residue polypeptide: U4-theraphotoxin-Hhn1a (85 aa).

The signal sequence occupies residues 1-22 (MKVTLIVILTCAAVLVLHTTAA). Residues 23-48 (EELEAESQLMEVGMPDTELAAVDEER) constitute a propeptide that is removed on maturation. 3 disulfides stabilise this stretch: Cys-52/Cys-66, Cys-56/Cys-77, and Cys-71/Cys-82.

The protein belongs to the neurotoxin 12 (Hwtx-2) family. 02 (Hwtx-2) subfamily. In terms of assembly, monomer. As to expression, expressed by the venom gland.

The protein resides in the secreted. Neurotoxin active on both insects and mammals. This chain is U4-theraphotoxin-Hhn1a, found in Cyriopagopus hainanus (Chinese bird spider).